A 609-amino-acid polypeptide reads, in one-letter code: MTARGETPEVETREDEEQSVKLAEILELLVAAGYFRARIKGLSPFDKVVGGMTWCITTCNFDIDVDLLFQENSTIGQKIALTEKIVSVLPKMKCPHRLEPHQIQGLDFIHIFPVIQWLVKRAIETRQEMGDYIRSYSVSQFQKEHSLPEDQEFEHRREKAVRTLSETLDVYRPRRKYKRQGGSAELMDEESRVHSTLLEYGRRYGLSKQMKPEKPEDRKVPVPQGLVGKGEVKEEEELRAEEELRIKALMTEMAAMGMEEGRLTASTVGQIVGLQSDEIKQMVSEYAEKQSELSAEDRPEYLGAAQQHRRKVASLNKQIGQRKKLLDQLQEKASELQSGSCEAKKQLTEVTSHMENLEQELLVLEKVESKADPSVLQKLRDLVAQNESLKLQEQQFRSKCREEMSRLQQNIDSLKAAATEHGEEKEQSQAFEQQYKAEKEKLQKIRLLLARRNREIAILHRKIDEVPSRAELTQYQKRFIELYGQVSATHKETKQFFTLYNTLDDKKVYLEKEVNLLNSVHDNFQQAMASPSVRDQFLRQMEQIVDGIRQSRNKMEKKKQENKMKRDQLNDEYLELLEKQRLYFKTVKEFREECRRNETLLTKMKGQTP.

Coiled coils occupy residues 229 to 459 and 510 to 579; these read KGEV…IAIL and LEKE…LLEK.

The protein belongs to the CCDC93 family.

Its subcellular location is the early endosome. Its function is as follows. May be involved in copper-dependent atp7a trafficking between the trans-Golgi network and vesicles in the cell periphery. This Xenopus laevis (African clawed frog) protein is Coiled-coil domain-containing protein 93 (ccdc93).